The primary structure comprises 182 residues: Crossover junction endodeoxyribonuclease RuvC (182 aa).

Active-site residues include D7, E69, and D141. 3 residues coordinate Mg(2+): D7, E69, and D141.

It belongs to the RuvC family. As to quaternary structure, homodimer which binds Holliday junction (HJ) DNA. The HJ becomes 2-fold symmetrical on binding to RuvC with unstacked arms; it has a different conformation from HJ DNA in complex with RuvA. In the full resolvosome a probable DNA-RuvA(4)-RuvB(12)-RuvC(2) complex forms which resolves the HJ. Mg(2+) is required as a cofactor.

The protein resides in the cytoplasm. The catalysed reaction is Endonucleolytic cleavage at a junction such as a reciprocal single-stranded crossover between two homologous DNA duplexes (Holliday junction).. In terms of biological role, the RuvA-RuvB-RuvC complex processes Holliday junction (HJ) DNA during genetic recombination and DNA repair. Endonuclease that resolves HJ intermediates. Cleaves cruciform DNA by making single-stranded nicks across the HJ at symmetrical positions within the homologous arms, yielding a 5'-phosphate and a 3'-hydroxyl group; requires a central core of homology in the junction. The consensus cleavage sequence is 5'-(A/T)TT(C/G)-3'. Cleavage occurs on the 3'-side of the TT dinucleotide at the point of strand exchange. HJ branch migration catalyzed by RuvA-RuvB allows RuvC to scan DNA until it finds its consensus sequence, where it cleaves and resolves the cruciform DNA. This is Crossover junction endodeoxyribonuclease RuvC from Polaromonas sp. (strain JS666 / ATCC BAA-500).